Here is a 293-residue protein sequence, read N- to C-terminus: ATP phosphoribosyltransferase (293 aa).

It belongs to the ATP phosphoribosyltransferase family. Long subfamily. It depends on Mg(2+) as a cofactor.

The protein resides in the cytoplasm. The catalysed reaction is 1-(5-phospho-beta-D-ribosyl)-ATP + diphosphate = 5-phospho-alpha-D-ribose 1-diphosphate + ATP. It participates in amino-acid biosynthesis; L-histidine biosynthesis; L-histidine from 5-phospho-alpha-D-ribose 1-diphosphate: step 1/9. With respect to regulation, feedback inhibited by histidine. In terms of biological role, catalyzes the condensation of ATP and 5-phosphoribose 1-diphosphate to form N'-(5'-phosphoribosyl)-ATP (PR-ATP). Has a crucial role in the pathway because the rate of histidine biosynthesis seems to be controlled primarily by regulation of HisG enzymatic activity. The polypeptide is ATP phosphoribosyltransferase (Solidesulfovibrio magneticus (strain ATCC 700980 / DSM 13731 / RS-1) (Desulfovibrio magneticus)).